Here is a 486-residue protein sequence, read N- to C-terminus: Cobyric acid synthase (486 aa).

A GATase cobBQ-type domain is found at 248–435; it reads VLNVVVPVLP…LHGLFESPAA (188 aa). The active-site Nucleophile is the Cys-329. Residue His-427 is part of the active site.

The protein belongs to the CobB/CobQ family. CobQ subfamily.

It functions in the pathway cofactor biosynthesis; adenosylcobalamin biosynthesis. Catalyzes amidations at positions B, D, E, and G on adenosylcobyrinic A,C-diamide. NH(2) groups are provided by glutamine, and one molecule of ATP is hydrogenolyzed for each amidation. The protein is Cobyric acid synthase of Pseudomonas syringae pv. syringae (strain B728a).